Here is a 166-residue protein sequence, read N- to C-terminus: Phosphopantetheine adenylyltransferase (166 aa).

Ser11 provides a ligand contact to substrate. ATP-binding positions include 11-12 (SF) and His19. Lys43, Leu75, and Arg89 together coordinate substrate. Residues 90–92 (GLR), Glu100, and 125–131 (YGYLSSS) contribute to the ATP site.

The protein belongs to the bacterial CoaD family. Homohexamer. The cofactor is Mg(2+).

It localises to the cytoplasm. It carries out the reaction (R)-4'-phosphopantetheine + ATP + H(+) = 3'-dephospho-CoA + diphosphate. It functions in the pathway cofactor biosynthesis; coenzyme A biosynthesis; CoA from (R)-pantothenate: step 4/5. Reversibly transfers an adenylyl group from ATP to 4'-phosphopantetheine, yielding dephospho-CoA (dPCoA) and pyrophosphate. The polypeptide is Phosphopantetheine adenylyltransferase (Syntrophotalea carbinolica (strain DSM 2380 / NBRC 103641 / GraBd1) (Pelobacter carbinolicus)).